The chain runs to 359 residues: DNA replication and repair protein RecF (359 aa).

An ATP-binding site is contributed by Gly30–Thr37.

Belongs to the RecF family.

The protein resides in the cytoplasm. In terms of biological role, the RecF protein is involved in DNA metabolism; it is required for DNA replication and normal SOS inducibility. RecF binds preferentially to single-stranded, linear DNA. It also seems to bind ATP. The sequence is that of DNA replication and repair protein RecF from Lactococcus lactis subsp. cremoris (strain MG1363).